The following is a 2731-amino-acid chain: Putative mediator of RNA polymerase II transcription subunit 12 (2731 aa).

4 coiled-coil regions span residues 5 to 37 (QQILQQQQQMIQQQQQQLHQQQMQQQQMQQQQQ), 75 to 108 (HIQQQQQQQQQQQQQQQQQQQQQQQQQQQQQQVH), 141 to 189 (QQIH…QQQQ), and 275 to 304 (IQQLQQQQQLQQQQQQQQQQQQQQQQQQQQ). Disordered stretches follow at residues 29-57 (QQQMQQQQQHHMQQQQPMQHMQQPHHMIH) and 101-145 (QQQQ…QIHQ). The segment covering 310 to 320 (QPQQQQQQQQP) has biased composition (low complexity). Disordered regions lie at residues 310–376 (QPQQ…DDKS), 432–451 (TQKSGQPPVMNKSGNKRPVP), 685–708 (LGHGHGHGHGHHSHSHSHNQQQPQ), and 1251–1341 (RNNN…QQKS). Residues 327-337 (QNPSYHSQSQI) are compositionally biased toward polar residues. A compositionally biased stretch (basic and acidic residues) spans 347–361 (KKYEIQKPADKKELG). The span at 688–701 (GHGHGHGHHSHSHS) shows a compositional bias: basic residues. The span at 1251 to 1268 (RNNNNNNKNKNNNKQSNN) shows a compositional bias: low complexity. Composition is skewed to acidic residues over residues 1275–1298 (NGEEQESDDDDDDDEDDDDDDNDE) and 1305–1326 (NDNEEDDEEDDEDEDEDEDDQM). Coiled-coil stretches lie at residues 1316–1344 (EDEDEDEDDQMDETKDSIKQQQQQKSNEN) and 1375–1433 (KLKK…DEEL). 6 disordered regions span residues 1778 to 1825 (HDDN…NNNG), 1892 to 1958 (TQSS…NNTT), 2212 to 2258 (SSSS…NNVK), 2307 to 2351 (TSSV…QQQQ), 2472 to 2532 (EIEK…KPQT), and 2705 to 2731 (HQQIPQQQQHQQHQQQKCSTTKYNNYK). Composition is skewed to low complexity over residues 1783 to 1824 (ENNN…NNNN), 1892 to 1909 (TQSSTTSPLTKSPSQSPT), 1916 to 1958 (NSTN…NNTT), 2212 to 2250 (SSSSSTTTTSTTSTPVTSSPSTTTTATTNQQQQQQQQQQ), 2307 to 2322 (TSSVSSTNTSIQSTTS), 2337 to 2351 (QQQTSQQQQQQQQQQ), 2472 to 2501 (EIEKQQQQQQIKSQPSTPLTSLPPQQHQQL), 2508 to 2532 (LQQQLNQQQQRQQPPQQLQQQKPQT), and 2705 to 2720 (HQQIPQQQQHQQHQQQ). Residues 2239–2270 (TNQQQQQQQQQQADQKNNVKKKLHELYQKIKS) are a coiled coil. Positions 2336–2363 (LQQQTSQQQQQQQQQQQQQSQQHQQQQQ) form a coiled coil. Residues 2523-2662 (QQLQQQKPQT…QQQQQQLQQL (140 aa)) adopt a coiled-coil conformation. Residues 2721–2731 (KCSTTKYNNYK) show a composition bias toward polar residues.

It belongs to the Mediator complex subunit 12 family. Component of the Mediator complex.

It localises to the nucleus. Component of the Mediator complex, a coactivator involved in the regulated transcription of nearly all RNA polymerase II-dependent genes. Mediator functions as a bridge to convey information from gene-specific regulatory proteins to the basal RNA polymerase II transcription machinery. Mediator is recruited to promoters by direct interactions with regulatory proteins and serves as a scaffold for the assembly of a functional preinitiation complex with RNA polymerase II and the general transcription factors. This chain is Putative mediator of RNA polymerase II transcription subunit 12 (med12), found in Dictyostelium discoideum (Social amoeba).